We begin with the raw amino-acid sequence, 179 residues long: Cytochrome b6-f complex iron-sulfur subunit (179 aa).

Residues 21 to 43 traverse the membrane as a helical segment; sequence LLTFGSVTGVALGALYPVVNYFI. The Rieske domain maps to 61 to 162; sequence GNDVVLSKFL…VSVTDDKVFL (102 aa). Residues cysteine 108, histidine 110, cysteine 126, and histidine 129 each coordinate [2Fe-2S] cluster. The cysteines at positions 113 and 128 are disulfide-linked.

Belongs to the Rieske iron-sulfur protein family. The 4 large subunits of the cytochrome b6-f complex are cytochrome b6, subunit IV (17 kDa polypeptide, PetD), cytochrome f and the Rieske protein, while the 4 small subunits are PetG, PetL, PetM and PetN. The complex functions as a dimer. [2Fe-2S] cluster serves as cofactor.

The protein localises to the cellular thylakoid membrane. The catalysed reaction is 2 oxidized [plastocyanin] + a plastoquinol + 2 H(+)(in) = 2 reduced [plastocyanin] + a plastoquinone + 4 H(+)(out). In terms of biological role, component of the cytochrome b6-f complex, which mediates electron transfer between photosystem II (PSII) and photosystem I (PSI), cyclic electron flow around PSI, and state transitions. This chain is Cytochrome b6-f complex iron-sulfur subunit, found in Synechococcus elongatus (strain ATCC 33912 / PCC 7942 / FACHB-805) (Anacystis nidulans R2).